We begin with the raw amino-acid sequence, 276 residues long: Aurora kinase C (276 aa).

Positions 16 to 266 constitute a Protein kinase domain; that stretch reads FEIGRPLGRG…LAQVLKHPWV (251 aa). ATP contacts are provided by residues 22 to 30 and K45; that span reads LGRGKFGRV. D139 (proton acceptor) is an active-site residue. Residue T171 is modified to Phosphothreonine; by PKA.

This sequence belongs to the protein kinase superfamily. Ser/Thr protein kinase family. Aurora subfamily. As to quaternary structure, component of the chromosomal passenger complex (CPC) composed of at least BIRC5/survivin, CDCA8/borealin, INCENP, AURKB or AURKC; predominantly independent AURKB- and AURKC-containing complexes exist; in the complex interacts directly with BIRC5/survivin and INCENP. Interacts with TACC1. Expressed only in testis.

Its subcellular location is the nucleus. The protein localises to the chromosome. The protein resides in the centromere. It is found in the cytoplasm. It localises to the cytoskeleton. Its subcellular location is the spindle. It carries out the reaction L-seryl-[protein] + ATP = O-phospho-L-seryl-[protein] + ADP + H(+). It catalyses the reaction L-threonyl-[protein] + ATP = O-phospho-L-threonyl-[protein] + ADP + H(+). Okadaic acid, an inhibitor of protein phosphatase 1 (PP1), protein phosphatase 2A (PP2A) and protein phosphatase 5 (PP5), increases AURKC activity. AURKC is also stabilized through its interaction with INCENP, which also acts as an activator. Serine/threonine-protein kinase component of the chromosomal passenger complex (CPC), a complex that acts as a key regulator of mitosis. The CPC complex has essential functions at the centromere in ensuring correct chromosome alignment and segregation and is required for chromatin-induced microtubule stabilization and spindle assembly. Also plays a role in meiosis and more particularly in spermatogenesis. Has redundant cellular functions with AURKB and can rescue an AURKB knockdown. Like AURKB, AURKC phosphorylates histone H3 at 'Ser-10' and 'Ser-28'. AURKC phosphorylates the CPC complex subunits BIRC5/survivin and INCENP leading to increased AURKC activity. Phosphorylates TACC1, another protein involved in cell division, at 'Ser-228'. The chain is Aurora kinase C (Aurkc) from Mus musculus (Mouse).